Reading from the N-terminus, the 203-residue chain is Guanylate kinase (203 aa).

The Guanylate kinase-like domain maps to 3–181 (GTLYVVSAPS…TLADLQAIFT (179 aa)). 10–17 (APSGAGKT) is an ATP binding site.

Belongs to the guanylate kinase family.

The protein localises to the cytoplasm. The catalysed reaction is GMP + ATP = GDP + ADP. Its function is as follows. Essential for recycling GMP and indirectly, cGMP. In Alkalilimnicola ehrlichii (strain ATCC BAA-1101 / DSM 17681 / MLHE-1), this protein is Guanylate kinase.